A 41-amino-acid polypeptide reads, in one-letter code: Inducible serine protease inhibitor 3 (41 aa).

Functionally, inhibits trypsin and the toxin proteases PR1 and PR2 of M.anisopliae. Does not inhibit chymotrypsin, subtilisin Carlsberg, proteinase K and porcine pancreatic elastase. In Galleria mellonella (Greater wax moth), this protein is Inducible serine protease inhibitor 3.